The following is a 228-amino-acid chain: Ribose-5-phosphate isomerase A (228 aa).

Substrate contacts are provided by residues 29 to 32 (TGST), 85 to 88 (DGAD), and 98 to 101 (KGGG). The active-site Proton acceptor is E107. Residue K125 coordinates substrate.

The protein belongs to the ribose 5-phosphate isomerase family. As to quaternary structure, homodimer.

The catalysed reaction is aldehydo-D-ribose 5-phosphate = D-ribulose 5-phosphate. Its pathway is carbohydrate degradation; pentose phosphate pathway; D-ribose 5-phosphate from D-ribulose 5-phosphate (non-oxidative stage): step 1/1. Its function is as follows. Catalyzes the reversible conversion of ribose-5-phosphate to ribulose 5-phosphate. In Staphylococcus aureus (strain MRSA252), this protein is Ribose-5-phosphate isomerase A.